The primary structure comprises 394 residues: MAKAKFERTKPHVNIGTIGHVDHGKTSLTAAITIVLAKTGGAQATAYDQIDAAPEEKERGITISTAHVEYETQNRHYAHVDCPGHADYVKNMITGAAQMDGAILVVSAADGPMPQTREHILLAKQVGVPAMVVFLNKIDMVDDPDLLELVEMEVRELLSKYGFPGDEIPIIKGSALQALEGKPEGEKAINELMDAVDSYIPQPVRATDKPFLMPIEDVFSISGRGTVVTGRVESGIIKVGEEIEIVGLKDTQKTTCTGVEMFRKLLDEGQAGDNVGILLRGTKREEVERGQVLAKPGSIKPHDKFEAEVYVLSKEEGGRHTPFTNDYRPQFYFRTTDVTGTIKLSADKQMVMPGDNATFTVELIKPIAMQEGLKFSIREGGRTVGAGVVTKINN.

Positions 10 to 204 constitute a tr-type G domain; the sequence is KPHVNIGTIG…AVDSYIPQPV (195 aa). Residues 19–26 are G1; the sequence is GHVDHGKT. 19 to 26 contributes to the GTP binding site; the sequence is GHVDHGKT. Threonine 26 is a Mg(2+) binding site. The G2 stretch occupies residues 60–64; sequence GITIS. The interval 81–84 is G3; that stretch reads DCPG. GTP is bound by residues 81–85 and 136–139; these read DCPGH and NKID. Positions 136-139 are G4; it reads NKID. The G5 stretch occupies residues 174-176; it reads SAL.

The protein belongs to the TRAFAC class translation factor GTPase superfamily. Classic translation factor GTPase family. EF-Tu/EF-1A subfamily. As to quaternary structure, monomer.

The protein resides in the cytoplasm. It carries out the reaction GTP + H2O = GDP + phosphate + H(+). Functionally, GTP hydrolase that promotes the GTP-dependent binding of aminoacyl-tRNA to the A-site of ribosomes during protein biosynthesis. The chain is Elongation factor Tu from Rickettsia conorii (strain ATCC VR-613 / Malish 7).